A 182-amino-acid chain; its full sequence is ATP synthase subunit delta (182 aa).

The protein belongs to the ATPase delta chain family. In terms of assembly, F-type ATPases have 2 components, F(1) - the catalytic core - and F(0) - the membrane proton channel. F(1) has five subunits: alpha(3), beta(3), gamma(1), delta(1), epsilon(1). CF(0) has four main subunits: a(1), b(1), b'(1) and c(10-14). The alpha and beta chains form an alternating ring which encloses part of the gamma chain. F(1) is attached to F(0) by a central stalk formed by the gamma and epsilon chains, while a peripheral stalk is formed by the delta, b and b' chains.

It is found in the cellular thylakoid membrane. Its function is as follows. F(1)F(0) ATP synthase produces ATP from ADP in the presence of a proton or sodium gradient. F-type ATPases consist of two structural domains, F(1) containing the extramembraneous catalytic core and F(0) containing the membrane proton channel, linked together by a central stalk and a peripheral stalk. During catalysis, ATP synthesis in the catalytic domain of F(1) is coupled via a rotary mechanism of the central stalk subunits to proton translocation. Functionally, this protein is part of the stalk that links CF(0) to CF(1). It either transmits conformational changes from CF(0) to CF(1) or is implicated in proton conduction. This Parasynechococcus marenigrum (strain WH8102) protein is ATP synthase subunit delta.